Reading from the N-terminus, the 253-residue chain is RNA polymerase sigma-F factor (253 aa).

The Polymerase core binding signature appears at 61–74 (DLFQIGCIGLLKSV). A DNA-binding region (H-T-H motif) is located at residues 221 to 240 (QSEVAARLGISQVQVSRLEK).

It belongs to the sigma-70 factor family.

Its function is as follows. Sigma factors are initiation factors that promote the attachment of RNA polymerase to specific initiation sites and are then released. This sigma factor is responsible for the expression of sporulation specific genes. It is responsible for directing gene expression in the forespore compartment of developing cells of Bacillus. This chain is RNA polymerase sigma-F factor (sigF), found in Priestia megaterium (Bacillus megaterium).